The chain runs to 128 residues: Elongation factor G (128 aa).

The protein belongs to the GTP-binding elongation factor family. EF-G/EF-2 subfamily.

The protein resides in the cytoplasm. Catalyzes the GTP-dependent ribosomal translocation step during translation elongation. During this step, the ribosome changes from the pre-translocational (PRE) to the post-translocational (POST) state as the newly formed A-site-bound peptidyl-tRNA and P-site-bound deacylated tRNA move to the P and E sites, respectively. Catalyzes the coordinated movement of the two tRNA molecules, the mRNA and conformational changes in the ribosome. This Planobispora rosea protein is Elongation factor G (fusA).